Here is a 1098-residue protein sequence, read N- to C-terminus: Eukaryotic translation initiation factor 3 subunit A (1098 aa).

The region spanning 324–503 is the PCI domain; it reads AQEQATRVLL…DCVRFGSSDA (180 aa). Residues 574–844 adopt a coiled-coil conformation; the sequence is TEIERIHRRK…ARQAVIDSQR (271 aa). Disordered regions lie at residues 599–648 and 805–1098; these read EKAA…KIKR and RAEK…NWRR. 3 stretches are compositionally biased toward basic and acidic residues: residues 608 to 648, 805 to 857, and 877 to 895; these read QAKR…KIKR, RAEK…REME, and MPQR…EPFR. The segment covering 905–914 has biased composition (polar residues); that stretch reads DSSWRSSAQP. Basic and acidic residues-rich tracts occupy residues 916–978 and 1054–1079; these read RKPD…ERGA and LPPR…RDGP. Positions 1080 to 1098 are enriched in low complexity; the sequence is NRNSGANNAGNADSANWRR.

Belongs to the eIF-3 subunit A family. As to quaternary structure, component of the eukaryotic translation initiation factor 3 (eIF-3) complex.

It is found in the cytoplasm. RNA-binding component of the eukaryotic translation initiation factor 3 (eIF-3) complex, which is involved in protein synthesis of a specialized repertoire of mRNAs and, together with other initiation factors, stimulates binding of mRNA and methionyl-tRNAi to the 40S ribosome. The eIF-3 complex specifically targets and initiates translation of a subset of mRNAs involved in cell proliferation. This is Eukaryotic translation initiation factor 3 subunit A from Caenorhabditis briggsae.